A 223-amino-acid polypeptide reads, in one-letter code: uncharacterized protein (223 aa).

An N-terminal signal peptide occupies residues 1–22 (MHLKKALCPALCTFLIHLCLHA). Residues 30–204 (DIFLMIDKSR…RSIAAAHSKR (175 aa)) form the VWFA domain. The segment at 199–223 (AAHSKRPTPTPPAKESSPRYTPSLD) is disordered.

This is an uncharacterized protein from Treponema pallidum (strain Nichols).